A 343-amino-acid chain; its full sequence is Dihydroorotase (343 aa).

Positions 14 and 16 each coordinate Zn(2+). Substrate is bound by residues 16 to 18 (HLR) and Asn42. Residues Lys100, His137, and His175 each contribute to the Zn(2+) site. Lys100 is modified (N6-carboxylysine). His137 contributes to the substrate binding site. Leu220 lines the substrate pocket. Asp248 provides a ligand contact to Zn(2+). The active site involves Asp248. The substrate site is built by His252 and Ala264.

It belongs to the metallo-dependent hydrolases superfamily. DHOase family. Class II DHOase subfamily. In terms of assembly, homodimer. Zn(2+) serves as cofactor.

It carries out the reaction (S)-dihydroorotate + H2O = N-carbamoyl-L-aspartate + H(+). Its pathway is pyrimidine metabolism; UMP biosynthesis via de novo pathway; (S)-dihydroorotate from bicarbonate: step 3/3. Functionally, catalyzes the reversible cyclization of carbamoyl aspartate to dihydroorotate. The sequence is that of Dihydroorotase from Synechococcus sp. (strain CC9902).